A 653-amino-acid polypeptide reads, in one-letter code: MSSRAHPVDGSPATDGGHVPMKPSPTRHKVGIPPKQNMFKDFMYTFKETFFHDDPLRDFKDQPKSKQFMLGLQSVFPVFDWGRNYTFKKFRGDLISGLTIASLCIPQDIGYAKLANLDPKYGLYSSFVPPLVYACMGSSRDIAIGPVAVVSLLLGTLLRAEIDPNTSPDEYLRLAFTATFFAGITEAALGFFRLGFLIDFLSHAAVVGFMGGAAITIALQQLKGFLGIKKFTKKTDIISVLESVFKAAHHGWNWQTILIGASFLTFLLTSKIIGKKSKKLFWVPAIAPLISVIVSTFFVYITRADKQGVQIVKHLDQGINPSSFHLIYFTGDNLAKGIRIGVVAGMVALTEAVAIGRTFAAMKDYQIDGNKEMVALGMMNVVGSMSSCYVATGSFSRSAVNFMAGCQTAVSNIIMSIVVLLTLLFLTPLFKYTPNAILAAIIINAVIPLIDIQAAILIFKVDKLDFIACIGAFFGVIFVSVEIGLLIAVSISFAKILLQVTRPRTAVLGNIPRTSVYRNIQQYPEATMVPGVLTIRVDSAIYFSNSNYVRERIQRWLHEEEEKVKAASLPRIQFLIIEMSPVTDIDTSGIHALEDLYKSLQKRDIQLILANPGPLVIGKLHLSHFADMLGQDNIYLTVADAVEACCPKLSNEV.

Residues 1–30 are disordered; the sequence is MSSRAHPVDGSPATDGGHVPMKPSPTRHKV. Over 1 to 91 the chain is Cytoplasmic; that stretch reads MSSRAHPVDG…GRNYTFKKFR (91 aa). Residues 92–112 traverse the membrane as a helical segment; sequence GDLISGLTIASLCIPQDIGYA. Over 113-116 the chain is Extracellular; that stretch reads KLAN. Residues 117–137 traverse the membrane as a helical segment; the sequence is LDPKYGLYSSFVPPLVYACMG. At 138 to 141 the chain is on the cytoplasmic side; it reads SSRD. A helical membrane pass occupies residues 142-162; that stretch reads IAIGPVAVVSLLLGTLLRAEI. The Extracellular portion of the chain corresponds to 163–173; the sequence is DPNTSPDEYLR. 2 helical membrane-spanning segments follow: residues 174 to 194 and 195 to 215; these read LAFTATFFAGITEAALGFFRL and GFLIDFLSHAAVVGFMGGAAI. Topologically, residues 216-253 are extracellular; it reads TIALQQLKGFLGIKKFTKKTDIISVLESVFKAAHHGWN. The helical transmembrane segment at 254–274 threads the bilayer; it reads WQTILIGASFLTFLLTSKIIG. Topologically, residues 275–280 are cytoplasmic; that stretch reads KKSKKL. The chain crosses the membrane as a helical span at residues 281 to 301; sequence FWVPAIAPLISVIVSTFFVYI. The Extracellular segment spans residues 302-339; it reads TRADKQGVQIVKHLDQGINPSSFHLIYFTGDNLAKGIR. The helical transmembrane segment at 340–360 threads the bilayer; that stretch reads IGVVAGMVALTEAVAIGRTFA. Topologically, residues 361–372 are cytoplasmic; the sequence is AMKDYQIDGNKE. The helical transmembrane segment at 373-393 threads the bilayer; the sequence is MVALGMMNVVGSMSSCYVATG. At 394–409 the chain is on the extracellular side; it reads SFSRSAVNFMAGCQTA. The helical transmembrane segment at 410–430 threads the bilayer; that stretch reads VSNIIMSIVVLLTLLFLTPLF. At 431-438 the chain is on the cytoplasmic side; it reads KYTPNAIL. A helical membrane pass occupies residues 439–459; that stretch reads AAIIINAVIPLIDIQAAILIF. The Extracellular portion of the chain corresponds to 460-466; the sequence is KVDKLDF. The chain crosses the membrane as a helical span at residues 467-487; that stretch reads IACIGAFFGVIFVSVEIGLLI. Residues 488 to 653 lie on the Cytoplasmic side of the membrane; sequence AVSISFAKIL…ACCPKLSNEV (166 aa). The STAS domain occupies 522–645; that stretch reads QYPEATMVPG…LTVADAVEAC (124 aa).

This sequence belongs to the SLC26A/SulP transporter (TC 2.A.53.1) family. Homodimer. Interacts with OASA1 through its STAS domain. Expressed in lateral root cap, root hairs, epidermal and cortical cells of roots.

It localises to the cell membrane. Interaction with OASA1 negatively impacts the transporter activity. Its function is as follows. High-affinity H(+)/sulfate cotransporter that mediates the uptake of the environmental sulfate by plant roots. Plays a central role in the regulation of sulfate assimilation. Unable to transport molybdate. This is Sulfate transporter 1.2 (SULTR1;2) from Arabidopsis thaliana (Mouse-ear cress).